The chain runs to 140 residues: Cysteine proteinase inhibitor 1 (140 aa).

A signal peptide spans methionine 1 to alanine 26. One can recognise a Cystatin domain in the interval glycine 48–aspartate 135. Positions glutamine 91–glycine 95 match the Secondary area of contact motif.

It belongs to the cystatin family. Phytocystatin subfamily.

It is found in the secreted. There are two distinct cystatins in rice seeds (Oryzacystatin-1 and -2) with different specificities against cysteine proteinases. May be involved in the control of germination by inhibition of endogenous cysteine proteinases. May play a role in defense by inhibiting exogenous proteases such as those present in digestive tracks of insects and nematodes. This chain is Cysteine proteinase inhibitor 1, found in Oryza sativa subsp. japonica (Rice).